Reading from the N-terminus, the 236-residue chain is Small ribosomal subunit protein uS2c (236 aa).

This sequence belongs to the universal ribosomal protein uS2 family.

The protein resides in the plastid. It localises to the chloroplast. The polypeptide is Small ribosomal subunit protein uS2c (rps2) (Manihot esculenta (Cassava)).